The primary structure comprises 126 residues: RutC family protein bbp_334 (126 aa).

It belongs to the RutC family.

The polypeptide is RutC family protein bbp_334 (Buchnera aphidicola subsp. Baizongia pistaciae (strain Bp)).